The following is a 687-amino-acid chain: DNA-directed RNA polymerase subunit beta' (687 aa).

The Zn(2+) site is built by C69, C71, C87, and C90. Residues D492, D494, and D496 each contribute to the Mg(2+) site.

This sequence belongs to the RNA polymerase beta' chain family. RpoC1 subfamily. As to quaternary structure, in plastids the minimal PEP RNA polymerase catalytic core is composed of four subunits: alpha, beta, beta', and beta''. When a (nuclear-encoded) sigma factor is associated with the core the holoenzyme is formed, which can initiate transcription. Requires Mg(2+) as cofactor. It depends on Zn(2+) as a cofactor.

It localises to the plastid. The protein localises to the chloroplast. It catalyses the reaction RNA(n) + a ribonucleoside 5'-triphosphate = RNA(n+1) + diphosphate. Its function is as follows. DNA-dependent RNA polymerase catalyzes the transcription of DNA into RNA using the four ribonucleoside triphosphates as substrates. The sequence is that of DNA-directed RNA polymerase subunit beta' from Silene latifolia (White campion).